Reading from the N-terminus, the 61-residue chain is Metallothionein-I, hippocampal (61 aa).

An N-acetylmethionine modification is found at Met1. The tract at residues 1 to 29 (MDPNCSCATGDSCACASTCKCKECKCTSC) is beta. Residues Cys5, Cys7, Cys13, Cys15, Cys19, Cys21, Cys24, Cys26, Cys29, Cys33, Cys34, Cys36, Cys37, Cys41, Cys44, Cys48, Cys50, and Cys57 each coordinate a divalent metal cation. Residues 30 to 61 (KKSCCSCCPVGCAKCAQGCICKGASDKCSCCA) are alpha. Ser58 is modified (phosphoserine). A divalent metal cation contacts are provided by Cys59 and Cys60.

Belongs to the metallothionein superfamily. Type 1 family.

Its function is as follows. Metallothioneins have a high content of cysteine residues that bind various heavy metals; these proteins are transcriptionally regulated by both heavy metals and glucocorticoids. This isoform may play a role in regulating the transport, accumulation, and compartmentation of zinc in the hippocampus. The sequence is that of Metallothionein-I, hippocampal from Bos taurus (Bovine).